A 311-amino-acid polypeptide reads, in one-letter code: Probable cysteine synthase (311 aa).

Lys-45 is modified (N6-(pyridoxal phosphate)lysine). Pyridoxal 5'-phosphate-binding positions include Asn-75, 182-186 (GTGGT), and Ser-270.

This sequence belongs to the cysteine synthase/cystathionine beta-synthase family. Pyridoxal 5'-phosphate is required as a cofactor.

It catalyses the reaction O-acetyl-L-serine + hydrogen sulfide = L-cysteine + acetate. It functions in the pathway amino-acid biosynthesis; L-cysteine biosynthesis; L-cysteine from L-serine: step 2/2. The sequence is that of Probable cysteine synthase (ytkP) from Bacillus subtilis (strain 168).